The primary structure comprises 138 residues: Nucleoside diphosphate kinase (138 aa).

The ATP site is built by lysine 9, phenylalanine 57, arginine 85, threonine 91, arginine 102, and asparagine 112. The active-site Pros-phosphohistidine intermediate is histidine 120.

This sequence belongs to the NDK family. Homotetramer. It depends on Mg(2+) as a cofactor.

It localises to the cytoplasm. The catalysed reaction is a 2'-deoxyribonucleoside 5'-diphosphate + ATP = a 2'-deoxyribonucleoside 5'-triphosphate + ADP. The enzyme catalyses a ribonucleoside 5'-diphosphate + ATP = a ribonucleoside 5'-triphosphate + ADP. Functionally, major role in the synthesis of nucleoside triphosphates other than ATP. The ATP gamma phosphate is transferred to the NDP beta phosphate via a ping-pong mechanism, using a phosphorylated active-site intermediate. This Streptococcus agalactiae serotype III (strain NEM316) protein is Nucleoside diphosphate kinase.